The primary structure comprises 82 residues: Sulfur carrier protein TusA (82 aa).

Cys19 acts as the Cysteine persulfide intermediate in catalysis.

Belongs to the sulfur carrier protein TusA family.

It localises to the cytoplasm. Sulfur carrier protein which probably makes part of a sulfur-relay system. This chain is Sulfur carrier protein TusA, found in Vibrio cholerae serotype O1 (strain ATCC 39541 / Classical Ogawa 395 / O395).